The primary structure comprises 367 residues: Putative F-box protein At3g21120 (367 aa).

One can recognise an F-box domain in the interval 1 to 43 (MHLPEDLVLEILSKVPAVSLARFRSTCRRWNALVVDGSFAKKH).

This chain is Putative F-box protein At3g21120, found in Arabidopsis thaliana (Mouse-ear cress).